The primary structure comprises 2696 residues: MDQTCELPRRNCLLPFSNPVNLDAPEDKDSPFGNGQSNFSEPLNGCTMQLSTVSGTSQNAYGQDSPSCYIPLRRLQDLASMINVEYLNGSADGSESFQDPEKSDSRAQTPIVCTSLSPGGPTALAMKQEPSCNNSPELQVKVTKTIKNGFLHFENFTCVDDADVDSEMDPEQPVTEDESIEEIFEETQTNATCNYETKSENGVKVAMGSEQDSTPESRHGAVKSPFLPLAPQTETQKNKQRNEVDGSNEKAALLPAPFSLGDTNITIEEQLNSINLSFQDDPDSSTSTLGNMLELPGTSSSSTSQELPFCQPKKKSTPLKYEVGDLIWAKFKRRPWWPCRICSDPLINTHSKMKVSNRRPYRQYYVEAFGDPSERAWVAGKAIVMFEGRHQFEELPVLRRRGKQKEKGYRHKVPQKILSKWEASVGLAEQYDVPKGSKNRKCIPGSIKLDSEEDMPFEDCTNDPESEHDLLLNGCLKSLAFDSEHSADEKEKPCAKSRARKSSDNPKRTSVKKGHIQFEAHKDERRGKIPENLGLNFISGDISDTQASNELSRIANSLTGSNTAPGSFLFSSCGKNTAKKEFETSNGDSLLGLPEGALISKCSREKNKPQRSLVCGSKVKLCYIGAGDEEKRSDSISICTTSDDGSSDLDPIEHSSESDNSVLEIPDAFDRTENMLSMQKNEKIKYSRFAATNTRVKAKQKPLISNSHTDHLMGCTKSAEPGTETSQVNLSDLKASTLVHKPQSDFTNDALSPKFNLSSSISSENSLIKGGAANQALLHSKSKQPKFRSIKCKHKENPVMAEPPVINEECSLKCCSSDTKGSPLASISKSGKVDGLKLLNNMHEKTRDSSDIETAVVKHVLSELKELSYRSLGEDVSDSGTSKPSKPLLFSSASSQNHIPIEPDYKFSTLLMMLKDMHDSKTKEQRLMTAQNLVSYRSPGRGDCSTNSPVGVSKVLVSGGSTHNSEKKGDGTQNSANPSPSGGDSALSGELSASLPGLLSDKRDLPASGKSRSDCVTRRNCGRSKPSSKLRDAFSAQMVKNTVNRKALKTERKRKLNQLPSVTLDAVLQGDRERGGSLRGGAEDPSKEDPLQIMGHLTSEDGDHFSDVHFDSKVKQSDPGKISEKGLSFENGKGPELDSVMNSENDELNGVNQVVPKKRWQRLNQRRTKPRKRMNRFKEKENSECAFRVLLPSDPVQEGRDEFPEHRTPSASILEEPLTEQNHADCLDSAGPRLNVCDKSSASIGDMEKEPGIPSLTPQAELPEPAVRSEKKRLRKPSKWLLEYTEEYDQIFAPKKKQKKVQEQVHKVSSRCEEESLLARGRSSAQNKQVDENSLISTKEEPPVLEREAPFLEGPLAQSELGGGHAELPQLTLSVPVAPEVSPRPALESEELLVKTPGNYESKRQRKPTKKLLESNDLDPGFMPKKGDLGLSKKCYEAGHLENGITESCATSYSKDFGGGTTKIFDKPRKRKRQRHAAAKMQCKKVKNDDSSKEIPGSEGELMPHRTATSPKETVEEGVEHDPGMPASKKMQGERGGGAALKENVCQNCEKLGELLLCEAQCCGAFHLECLGLTEMPRGKFICNECRTGIHTCFVCKQSGEDVKRCLLPLCGKFYHEECVQKYPPTVMQNKGFRCSLHICITCHAANPANVSASKGRLMRCVRCPVAYHANDFCLAAGSKILASNSIICPNHFTPRRGCRNHEHVNVSWCFVCSEGGSLLCCDSCPAAFHRECLNIDIPEGNWYCNDCKAGKKPHYREIVWVKVGRYRWWPAEICHPRAVPSNIDKMRHDVGEFPVLFFGSNDYLWTHQARVFPYMEGDVSSKDKMGKGVDGTYKKALQEAAARFEELKAQKELRQLQEDRKNDKKPPPYKHIKVNRPIGRVQIFTADLSEIPRCNCKATDENPCGIDSECINRMLLYECHPTVCPAGGRCQNQCFSKRQYPEVEIFRTLQRGWGLRTKTDIKKGEFVNEYVGELIDEEECRARIRYAQEHDITNFYMLTLDKDRIIDAGPKGNYARFMNHCCQPNCETQKWSVNGDTRVGLFALSDIKAGTELTFNYNLECLGNGKTVCKCGAPNCSGFLGVRPKNQPIATEEKSKKFKKKQQGKRRTQGEITKEREDECFSCGDAGQLVSCKKPGCPKVYHADCLNLTKRPAGKWECPWHQCDICGKEAASFCEMCPSSFCKQHREGMLFISKLDGRLSCTEHDPCGPNPLEPGEIREYVPPPVPLPPGPSTHLAEQSTGMAAQAPKMSDKPPADTNQMLSLSKKALAGTCQRPLLPERPLERTDSRPQPLDKVRDLAGSGTKSQSLVSSQRPLDRPPAVAGPRPQLSDKPSPVTSPSSSPSVRSQPLERPLGTADPRLDKSIGAASPRPQSLEKTSVPTGLRLPPPDRLLITSSPKPQTSDRPTDKPHASLSQRLPPPEKVLSAVVQTLVAKEKALRPVDQNTQSKNRAALVMDLIDLTPRQKERAASPHQVTPQADEKMPVLESSSWPASKGLGHMPRAVEKGCVSDPLQTSGKAAAPSEDPWQAVKSLTQARLLSQPPAKAFLYEPTTQASGRASAGAEQTPGPLSQSPGLVKQAKQMVGGQQLPALAAKSGQSFRSLGKAPASLPTEEKKLVTTEQSPWALGKASSRAGLWPIVAGQTLAQSCWSAGSTQTLAQTCWSLGRGQDPKPEQNTLPALNQAPSSHKCAESEQK.

Ser-117 carries the post-translational modification Phosphoserine. 2 disordered regions span residues 207 to 252 (MGSE…EKAA) and 281 to 311 (DPDS…PFCQ). A compositionally biased stretch (basic and acidic residues) spans 236-248 (QKNKQRNEVDGSN). Composition is skewed to polar residues over residues 281-290 (DPDSSTSTLG) and 297-306 (GTSSSSTSQE). The region spanning 323 to 388 (VGDLIWAKFK…AGKAIVMFEG (66 aa)) is the PWWP 1 domain. 2 positions are modified to phosphoserine: Ser-483 and Ser-486. Positions 487 to 514 (ADEKEKPCAKSRARKSSDNPKRTSVKKG) are disordered. Ser-766 carries the post-translational modification Phosphoserine. The tract at residues 872-891 (LGEDVSDSGTSKPSKPLLFS) is disordered. Lys-906 participates in a covalent cross-link: Glycyl lysine isopeptide (Lys-Gly) (interchain with G-Cter in SUMO2). Disordered stretches follow at residues 936-1035 (YRSP…DAFS), 1067-1093 (VLQG…PLQI), 1112-1134 (SKVK…NGKG), 1243-1272 (SIGD…SEKK), 1294-1344 (PKKK…EPPV), 1382-1428 (SPRP…KKGD), and 1480-1534 (KMQC…MQGE). The span at 948–961 (SPVGVSKVLVSGGS) shows a compositional bias: low complexity. A compositionally biased stretch (polar residues) spans 971 to 982 (GTQNSANPSPSG). Basic and acidic residues-rich tracts occupy residues 1000–1017 (SDKR…DCVT), 1070–1090 (GDRE…KEDP), and 1112–1124 (SKVK…KISE). Positions 1300–1314 (KVQEQVHKVSSRCEE) are enriched in basic and acidic residues. Residues 1323 to 1337 (SSAQNKQVDENSLIS) show a composition bias toward polar residues. A Glycyl lysine isopeptide (Lys-Gly) (interchain with G-Cter in SUMO2) cross-link involves residue Lys-1339. The residue at position 1510 (Ser-1510) is a Phosphoserine. Residues 1513–1523 (ETVEEGVEHDP) show a composition bias toward basic and acidic residues. 3 consecutive PHD-type zinc fingers follow at residues 1543 to 1589 (ENVC…CRTG), 1590 to 1646 (IHTC…CHAA), and 1707 to 1751 (VSWC…CKAG). A PWWP 2 domain is found at 1756-1818 (YREIVWVKVG…QARVFPYMEG (63 aa)). Positions 1890–1940 (SEIPRCNCKATDENPCGIDSECINRMLLYECHPTVCPAGGRCQNQCFSKRQ) constitute an AWS domain. The SET domain occupies 1942-2059 (PEVEIFRTLQ…AGTELTFNYN (118 aa)). S-adenosyl-L-methionine is bound by residues 1952-1954 (RGW), 1994-1997 (TNFY), 2020-2021 (NH), Asn-2065, and Lys-2071. An inhibits enzyme activity in the absence of bound histone region spans residues 2060–2066 (LECLGNG). The 17-residue stretch at 2066 to 2082 (GKTVCKCGAPNCSGFLG) folds into the Post-SET domain. The segment at 2091–2111 (ATEEKSKKFKKKQQGKRRTQG) is disordered. Basic residues predominate over residues 2097-2108 (KKFKKKQQGKRR). The PHD-type 4; atypical zinc-finger motif lies at 2118 to 2165 (EDECFSCGDAGQLVSCKKPGCPKVYHADCLNLTKRPAGKWECPWHQCD). The tract at residues 2213–2422 (LEPGEIREYV…SLSQRLPPPE (210 aa)) is disordered. Over residues 2222-2232 (VPPPVPLPPGP) the composition is skewed to pro residues. A compositionally biased stretch (basic and acidic residues) spans 2281 to 2298 (RPLERTDSRPQPLDKVRD). Residues 2303–2314 (GTKSQSLVSSQR) are compositionally biased toward polar residues. Residues 2330–2348 (SDKPSPVTSPSSSPSVRSQ) are compositionally biased toward low complexity. Ser-2369 carries the post-translational modification Phosphoserine. Composition is skewed to polar residues over residues 2371–2381 (RPQSLEKTSVP) and 2394–2404 (ITSSPKPQTSD). Thr-2462 bears the Phosphothreonine mark. 4 disordered regions span residues 2464–2499 (RQKE…GLGH), 2553–2575 (TQAS…QSPG), 2595–2616 (KSGQ…EEKK), and 2665–2696 (LGRG…SEQK). Position 2471 is a phosphoserine (Ser-2471). Lys-2616 is covalently cross-linked (Glycyl lysine isopeptide (Lys-Gly) (interchain with G-Cter in SUMO2)). Residues 2674 to 2686 (EQNTLPALNQAPS) show a composition bias toward polar residues.

The protein belongs to the class V-like SAM-binding methyltransferase superfamily. Interacts with the ligand-binding domains of RARA and THRA in the absence of ligand; in the presence of ligand the interaction is severely disrupted but some binding still occurs. Interacts with the ligand-binding domains of RXRA and ESRRA only in the presence of ligand. Interacts with ZNF496. Interacts with AR DNA- and ligand-binding domains. In terms of tissue distribution, expressed in the fetal/adult brain, kidney, skeletal muscle, spleen, and the thymus, and faintly in the lung.

The protein resides in the nucleus. It is found in the chromosome. It catalyses the reaction L-lysyl(36)-[histone H3] + 2 S-adenosyl-L-methionine = N(6),N(6)-dimethyl-L-lysyl(36)-[histone H3] + 2 S-adenosyl-L-homocysteine + 2 H(+). In terms of biological role, histone methyltransferase that dimethylates Lys-36 of histone H3 (H3K36me2). Transcriptional intermediary factor capable of both negatively or positively influencing transcription, depending on the cellular context. This is Histone-lysine N-methyltransferase, H3 lysine-36 specific (NSD1) from Homo sapiens (Human).